We begin with the raw amino-acid sequence, 236 residues long: UPF0502 protein Bpro_3844 (236 aa).

The protein belongs to the UPF0502 family.

The chain is UPF0502 protein Bpro_3844 from Polaromonas sp. (strain JS666 / ATCC BAA-500).